The chain runs to 237 residues: Protein ULTRAPETALA 1 (237 aa).

Residues 18-116 form the SAND domain; it reads EELQEMSGVN…SKTVLLKYYN (99 aa). The CW-type zinc finger occupies 133-191; it reads VCHRDEFVGCNDCGKERRFRLRSRDECRLHHNAMGDPNWKCSDFPYDKITCEEEEERGS.

Interacts with HHO5. Associates with ATX1 for trimethylating 'Lys-4' on histone H3 (H3K4me3) at flower MADS box gene loci. Expressed at low levels in seedlings, roots, shoots, leaves, stems, inflorescences, pollen, flowers and siliques, with highest levels dividing tissues including inflorescence.

It is found in the cytoplasm. The protein localises to the nucleus. Its function is as follows. Putative transcription factor that acts as a key negative regulator of cell accumulation in shoot and floral meristems. Negatively regulates the size of the WUSCHEL (WUS)-expressing organizing center in inflorescence meristems. May act by down-regulating expression of WUS. Acts as an antirepressor that counteracts EMF1 action through modulation of trimethylated 'Lys-4' on histone H3 (H3K4me3) marks on target gene loci (including genes involved in salt stress response and flower development). Collaboratively with RBL and CYP40/SQN, influences floral meristem (FM) determinacy in an AGAMOUS and SUPERMAN-dependent manner, thus contributing to the floral developmental homeostasis. The chain is Protein ULTRAPETALA 1 from Arabidopsis thaliana (Mouse-ear cress).